A 522-amino-acid chain; its full sequence is Maturase K (522 aa).

This sequence belongs to the intron maturase 2 family. MatK subfamily.

It localises to the plastid. Its subcellular location is the chloroplast. Its function is as follows. Usually encoded in the trnK tRNA gene intron. Probably assists in splicing its own and other chloroplast group II introns. The protein is Maturase K of Sapindus saponaria (Soapberry).